Reading from the N-terminus, the 446-residue chain is Glutamine synthetase (446 aa).

The GS beta-grasp domain occupies 15-102; it reads RDIRFVRLWF…MFCDITMPDG (88 aa). Residues 109–446 form the GS catalytic domain; it reads PRHVLRRQLT…PYELRTYLSL (338 aa). Positions 132 and 134 each coordinate Mg(2+). Residue Glu184 coordinates ATP. Positions 189 and 196 each coordinate Mg(2+). Gly241 contributes to the L-glutamate binding site. Residue His245 coordinates Mg(2+). ATP contacts are provided by residues 247–249 and Ser249; that span reads HMS. The L-glutamate site is built by Arg298, Glu304, and Arg316. The ATP site is built by Arg316 and Arg321. Mg(2+) is bound at residue Glu336. Arg338 is a binding site for L-glutamate.

The protein belongs to the glutamine synthetase family. In terms of assembly, oligomer of 12 subunits arranged in the form of two hexagons. In its feedback-inhibited form, interacts with TnrA in order to block its DNA-binding activity. It depends on Mg(2+) as a cofactor.

Its subcellular location is the cytoplasm. It catalyses the reaction L-glutamate + NH4(+) + ATP = L-glutamine + ADP + phosphate + H(+). Inhibited by glutamine. Its function is as follows. Glutamine synthetase (GS) is an unusual multitasking protein that functions as an enzyme, a transcription coregulator, and a chaperone in ammonium assimilation and in the regulation of genes involved in nitrogen metabolism. It catalyzes the ATP-dependent biosynthesis of glutamine from glutamate and ammonia. Feedback-inhibited GlnA also interacts with and regulates the activity of the transcriptional regulator TnrA. During nitrogen limitation, TnrA is in its DNA-binding active state and turns on the transcription of genes required for nitrogen assimilation. Under conditions of nitrogen excess, feedback-inhibited GlnA forms a stable complex with TnrA, which inhibits its DNA-binding activity. In contrast, feedback-inhibited GlnA acts as a chaperone to stabilize the DNA-binding activity of GlnR, which represses the transcription of nitrogen assimilation genes. The chain is Glutamine synthetase from Mycobacterium bovis (strain ATCC BAA-935 / AF2122/97).